A 422-amino-acid chain; its full sequence is Isocitrate dehydrogenase [NADP] (422 aa).

T94 is a binding site for NADP(+). Positions 103, 105, 109, 119, and 143 each coordinate D-threo-isocitrate. D310 serves as a coordination point for Mg(2+). NADP(+)-binding positions include 344–350, N357, Y396, and R400; that span reads HGTAPKY.

It belongs to the isocitrate and isopropylmalate dehydrogenases family. As to quaternary structure, homodimer. Mg(2+) is required as a cofactor. It depends on Mn(2+) as a cofactor.

The enzyme catalyses D-threo-isocitrate + NADP(+) = 2-oxoglutarate + CO2 + NADPH. Catalyzes the oxidative decarboxylation of isocitrate to 2-oxoglutarate and carbon dioxide with the concomitant reduction of NADP(+). The sequence is that of Isocitrate dehydrogenase [NADP] (icd) from Staphylococcus epidermidis (strain ATCC 35984 / DSM 28319 / BCRC 17069 / CCUG 31568 / BM 3577 / RP62A).